The following is a 376-amino-acid chain: Neuropeptide receptor 3 (376 aa).

Topologically, residues 1–29 (MEGGRNCVMTVQQWQPEYNDMNQIRAIFS) are extracellular. A helical transmembrane segment spans residues 30–50 (LLYLLVWVGAIVGNTLVLYVL). Residues 51-66 (TFNQVSLSVRTVFVGC) lie on the Cytoplasmic side of the membrane. A helical membrane pass occupies residues 67–87 (LAGSDLLMCLFSLPITAISIF). The Extracellular segment spans residues 88–89 (SR). The chain crosses the membrane as a helical span at residues 90-110 (VWVFPAIFCKLIGVFQGGTIF). The cysteines at positions 98 and 175 are disulfide-linked. Residues 111-139 (VSSFTLTVIALDRCVLILRPNQEIVNFPR) lie on the Cytoplasmic side of the membrane. A helical transmembrane segment spans residues 140-160 (AVFIVFCIWLLGYSLALPVGI). At 161–197 (YSDIAVYDEICGTFCEENWPDFNPDTGRSGIRRAYGL) the chain is on the extracellular side. Residues 198 to 218 (SVLVLQFGIPALISSICYWMI) traverse the membrane as a helical segment. Over 219-251 (SRVMSDQLARRRGHNIRPESETKLVNRKTRANR) the chain is Cytoplasmic. Residues 252–272 (MMIVMVVGFVLAWMPFNAVNL) form a helical membrane-spanning segment. Over 273–284 (YRDLFGISKWYS) the chain is Extracellular. The chain crosses the membrane as a helical span at residues 285-305 (TVFALCHVCAMCSAVLNPIIY). Topologically, residues 306 to 376 (SWFNPQFRQS…NDYRAGDQLL (71 aa)) are cytoplasmic.

The protein belongs to the G-protein coupled receptor 1 family.

The protein resides in the cell membrane. Functionally, G-protein coupled receptor for flp-15 neuropeptides. Receptor activation assays suggest binding to predicted flp-15 peptides, GGPQGPLRF-NH2 and RGPSGPLRF-NH2. Likely involved in Gi/Go-coupled signaling pathways. This is Neuropeptide receptor 3 from Caenorhabditis elegans.